Here is a 237-residue protein sequence, read N- to C-terminus: Type II secretion system protein J (237 aa).

A propeptide spans 1 to 6 (MRLQRG) (leader sequence). An N-methylphenylalanine modification is found at F7. Residues 7–29 (FTLLELLIAIAIFALLALATYRM) traverse the membrane as a helical segment. The segment at 203–237 (PLKQDQPQGQPGGENGENGEGGVPQPPEGMPGAPE) is disordered. Gly residues predominate over residues 212-224 (QPGGENGENGEGG). A compositionally biased stretch (pro residues) spans 226-237 (PQPPEGMPGAPE).

Belongs to the GSP J family. Type II secretion is composed of four main components: the outer membrane complex, the inner membrane complex, the cytoplasmic secretion ATPase and the periplasm-spanning pseudopilus. Forms the tip of the type II pseudopilus by interacting with XcpV, XcpU and XcpX. Interacts with core component XcpT. Cleaved by prepilin peptidase. In terms of processing, methylated by prepilin peptidase at the amino group of the N-terminal phenylalanine once the leader sequence is cleaved by prepilin peptidase.

The protein resides in the cell inner membrane. In terms of biological role, component of the type II secretion system required for the energy-dependent secretion of extracellular factors such as proteases and toxins from the periplasm. Part of the pseudopilus tip complex that is critical for the recognition and binding of secretion substrates. Type II pseudopilus confers increased bacterial adhesive capabilities. The protein is Type II secretion system protein J (xcpW) of Pseudomonas aeruginosa (strain ATCC 15692 / DSM 22644 / CIP 104116 / JCM 14847 / LMG 12228 / 1C / PRS 101 / PAO1).